We begin with the raw amino-acid sequence, 301 residues long: Protoheme IX farnesyltransferase 1 (301 aa).

9 helical membrane-spanning segments follow: residues 29–49 (VVAL…PHAV), 51–71 (VQPL…AAAL), 101–121 (ALIF…SLVN), 123–143 (LTAW…TAYL), 150–170 (NIVI…TAVT), 177–197 (ALLL…ALAI), 223–243 (CILL…LVGM), 244–264 (CGPV…YKAW), and 274–294 (LAMQ…MALL).

It belongs to the UbiA prenyltransferase family. Protoheme IX farnesyltransferase subfamily.

It localises to the cell inner membrane. It catalyses the reaction heme b + (2E,6E)-farnesyl diphosphate + H2O = Fe(II)-heme o + diphosphate. It functions in the pathway porphyrin-containing compound metabolism; heme O biosynthesis; heme O from protoheme: step 1/1. Functionally, converts heme B (protoheme IX) to heme O by substitution of the vinyl group on carbon 2 of heme B porphyrin ring with a hydroxyethyl farnesyl side group. This is Protoheme IX farnesyltransferase 1 from Shewanella baltica (strain OS195).